Consider the following 152-residue polypeptide: Xanthine-guanine phosphoribosyltransferase (152 aa).

Residues 37–38 (RG), arginine 69, and 88–96 (DDLVDTGGT) contribute to the 5-phospho-alpha-D-ribose 1-diphosphate site. Arginine 69 lines the GMP pocket. Aspartate 89 lines the Mg(2+) pocket. Residues aspartate 92 and isoleucine 135 each coordinate guanine. Aspartate 92 and isoleucine 135 together coordinate xanthine. Residues 92 to 96 (DTGGT) and 134 to 135 (WI) each bind GMP.

The protein belongs to the purine/pyrimidine phosphoribosyltransferase family. XGPT subfamily. In terms of assembly, homotetramer. Mg(2+) is required as a cofactor.

The protein localises to the cell inner membrane. The enzyme catalyses GMP + diphosphate = guanine + 5-phospho-alpha-D-ribose 1-diphosphate. It carries out the reaction XMP + diphosphate = xanthine + 5-phospho-alpha-D-ribose 1-diphosphate. The catalysed reaction is IMP + diphosphate = hypoxanthine + 5-phospho-alpha-D-ribose 1-diphosphate. The protein operates within purine metabolism; GMP biosynthesis via salvage pathway; GMP from guanine: step 1/1. Its pathway is purine metabolism; XMP biosynthesis via salvage pathway; XMP from xanthine: step 1/1. Functionally, purine salvage pathway enzyme that catalyzes the transfer of the ribosyl-5-phosphate group from 5-phospho-alpha-D-ribose 1-diphosphate (PRPP) to the N9 position of the 6-oxopurines guanine and xanthine to form the corresponding ribonucleotides GMP (guanosine 5'-monophosphate) and XMP (xanthosine 5'-monophosphate), with the release of PPi. To a lesser extent, also acts on hypoxanthine. The polypeptide is Xanthine-guanine phosphoribosyltransferase (Citrobacter koseri (strain ATCC BAA-895 / CDC 4225-83 / SGSC4696)).